Reading from the N-terminus, the 225-residue chain is Lipoprotein CseA (225 aa).

An N-terminal signal peptide occupies residues 1–36 (MRGLTDGRTPRGTRRTTQAASTAVAVFVALGVSLAG). Cys37 carries the N-palmitoyl cysteine lipid modification. Cys37 is lipidated: S-diacylglycerol cysteine. 2 disordered regions span residues 40–77 (GGTG…APDR) and 205–225 (THND…EPDS). Residues 60–73 (SASPAPAAKASPSK) are compositionally biased toward low complexity.

The protein localises to the cell membrane. May be involved in the stabilization of the cell envelope or may interact with the sensor protein CseC to modulate its activity, in response to cell envelope stress. This is Lipoprotein CseA (cseA) from Streptomyces coelicolor (strain ATCC BAA-471 / A3(2) / M145).